Consider the following 35-residue polypeptide: Thaumatin-like protein 6 (35 aa).

This sequence belongs to the thaumatin family.

The chain is Thaumatin-like protein 6 from Glebionis coronaria (Crown daisy).